The primary structure comprises 1343 residues: DNA-directed RNA polymerase subunit beta (1343 aa).

The protein belongs to the RNA polymerase beta chain family. In terms of assembly, the RNAP catalytic core consists of 2 alpha, 1 beta, 1 beta' and 1 omega subunit. When a sigma factor is associated with the core the holoenzyme is formed, which can initiate transcription.

It carries out the reaction RNA(n) + a ribonucleoside 5'-triphosphate = RNA(n+1) + diphosphate. Its function is as follows. DNA-dependent RNA polymerase catalyzes the transcription of DNA into RNA using the four ribonucleoside triphosphates as substrates. This chain is DNA-directed RNA polymerase subunit beta, found in Shewanella baltica (strain OS223).